Here is a 1101-residue protein sequence, read N- to C-terminus: Isoleucine--tRNA ligase (1101 aa).

A 'HIGH' region motif is present at residues 50-60; that stretch reads PFANGLPHYGH. A 'KMSKS' region motif is present at residues 629 to 633; it reads KLSKR. Residue Lys-632 coordinates ATP.

This sequence belongs to the class-I aminoacyl-tRNA synthetase family. IleS type 2 subfamily. As to quaternary structure, monomer. The cofactor is Zn(2+).

It localises to the cytoplasm. The catalysed reaction is tRNA(Ile) + L-isoleucine + ATP = L-isoleucyl-tRNA(Ile) + AMP + diphosphate. Catalyzes the attachment of isoleucine to tRNA(Ile). As IleRS can inadvertently accommodate and process structurally similar amino acids such as valine, to avoid such errors it has two additional distinct tRNA(Ile)-dependent editing activities. One activity is designated as 'pretransfer' editing and involves the hydrolysis of activated Val-AMP. The other activity is designated 'posttransfer' editing and involves deacylation of mischarged Val-tRNA(Ile). This Anaplasma marginale (strain St. Maries) protein is Isoleucine--tRNA ligase.